We begin with the raw amino-acid sequence, 147 residues long: MKLVLQRVKEASVSIDGKIAGAINQGLLLLVGVGPDDAAEDLAYAVRKIVNMRIFSDADGKMNQSIQDIKGSILSVSQFTLYADTKKGNRPAFTGAAKPDMASQFYDRFNEQLADFVPVERGVFGADMQVSLINDGPVTIILDTKCH.

The short motif at Gly136 to Pro137 is the Gly-cisPro motif, important for rejection of L-amino acids element.

Belongs to the DTD family. As to quaternary structure, homodimer.

Its subcellular location is the cytoplasm. It catalyses the reaction glycyl-tRNA(Ala) + H2O = tRNA(Ala) + glycine + H(+). It carries out the reaction a D-aminoacyl-tRNA + H2O = a tRNA + a D-alpha-amino acid + H(+). Functionally, an aminoacyl-tRNA editing enzyme that deacylates mischarged D-aminoacyl-tRNAs. Also deacylates mischarged glycyl-tRNA(Ala), protecting cells against glycine mischarging by AlaRS. Acts via tRNA-based rather than protein-based catalysis; rejects L-amino acids rather than detecting D-amino acids in the active site. By recycling D-aminoacyl-tRNA to D-amino acids and free tRNA molecules, this enzyme counteracts the toxicity associated with the formation of D-aminoacyl-tRNA entities in vivo and helps enforce protein L-homochirality. The sequence is that of D-aminoacyl-tRNA deacylase from Streptococcus dysgalactiae subsp. equisimilis (Streptococcus equisimilis).